The following is a 150-amino-acid chain: Myosin, essential light chain (150 aa).

EF-hand domains follow at residues 3–38 and 75–110; these read ASADQIQECFSIFDKDNDGKVSVEDIGACLRSLGKS and EQQKEMLDAFKALDKEGHGTIQGAELRQLLTTLGDY. Residues aspartate 16, aspartate 18, aspartate 20, lysine 22, and aspartate 27 each contribute to the Ca(2+) site.

Myosin is a hexamer of 2 heavy chains and 4 light chains (two regulatory light chains and two essential light chains).

In Dictyostelium discoideum (Social amoeba), this protein is Myosin, essential light chain (mlcE).